A 310-amino-acid chain; its full sequence is Malate dehydrogenase (310 aa).

NAD(+) is bound by residues 7–12 and Asp-32; that span reads GAGNVG. 2 residues coordinate substrate: Arg-81 and Arg-87. Residues Asn-94 and 117–119 contribute to the NAD(+) site; that span reads VSN. Positions 119 and 150 each coordinate substrate. The Proton acceptor role is filled by His-174.

This sequence belongs to the LDH/MDH superfamily. MDH type 3 family.

The enzyme catalyses (S)-malate + NAD(+) = oxaloacetate + NADH + H(+). Its function is as follows. Catalyzes the reversible oxidation of malate to oxaloacetate. The protein is Malate dehydrogenase of Pelodictyon phaeoclathratiforme (strain DSM 5477 / BU-1).